The following is a 409-amino-acid chain: Multifunctional CCA protein (409 aa).

Positions 8 and 11 each coordinate ATP. Residues Gly8 and Arg11 each contribute to the CTP site. Positions 21 and 23 each coordinate Mg(2+). Arg91, Arg137, and Arg140 together coordinate ATP. Arg91, Arg137, and Arg140 together coordinate CTP. The HD domain occupies 228–329 (TGVHTLMVLT…LKALEGLDAF (102 aa)).

Belongs to the tRNA nucleotidyltransferase/poly(A) polymerase family. Bacterial CCA-adding enzyme type 1 subfamily. In terms of assembly, monomer. Can also form homodimers and oligomers. Requires Mg(2+) as cofactor. The cofactor is Ni(2+).

The catalysed reaction is a tRNA precursor + 2 CTP + ATP = a tRNA with a 3' CCA end + 3 diphosphate. The enzyme catalyses a tRNA with a 3' CCA end + 2 CTP + ATP = a tRNA with a 3' CCACCA end + 3 diphosphate. Catalyzes the addition and repair of the essential 3'-terminal CCA sequence in tRNAs without using a nucleic acid template. Adds these three nucleotides in the order of C, C, and A to the tRNA nucleotide-73, using CTP and ATP as substrates and producing inorganic pyrophosphate. tRNA 3'-terminal CCA addition is required both for tRNA processing and repair. Also involved in tRNA surveillance by mediating tandem CCA addition to generate a CCACCA at the 3' terminus of unstable tRNAs. While stable tRNAs receive only 3'-terminal CCA, unstable tRNAs are marked with CCACCA and rapidly degraded. This is Multifunctional CCA protein from Thioalkalivibrio sulfidiphilus (strain HL-EbGR7).